Consider the following 288-residue polypeptide: Extracellular ribonuclease (288 aa).

A signal peptide spans 1–26 (MTKKAWFLPLVCVLLISGWLAPAASA).

The protein resides in the secreted. Mg(2+)-activated ribonuclease which hydrolyzes RNA apparently nonspecifically into oligonucleotides with 5'-terminal phosphate. The protein is Extracellular ribonuclease (bsn) of Bacillus subtilis (strain 168).